An 85-amino-acid polypeptide reads, in one-letter code: Neurotoxin beta-KTx 14.3 (85 aa).

Residues 1-20 form the signal peptide; it reads MKQYIFFLALIVLTATFAEA. Residues 21–37 constitute a propeptide that is removed on maturation; that stretch reads GKKTEILDKVKKVFSKG. Positions 49–85 constitute a BetaSPN-type CS-alpha/beta domain; the sequence is ELGCPFIEKWCEDHCESKKQVGKCENFDCSCVKLGGK. 3 disulfides stabilise this stretch: Cys52–Cys72, Cys59–Cys77, and Cys63–Cys79.

Belongs to the long chain scorpion toxin family. Class 2 subfamily. As to expression, expressed by the venom gland.

The protein localises to the secreted. In terms of biological role, toxin with activity on voltage-gated potassium channels. Moderately and reversibly blocks up to 50% of the activity of Kv7.1/KCNQ1 (tested at 22 uM). 3D-structure modeling of the KCNQ1-toxin complex shows that the toxin interacts with the channel pore domain. Additionally, shows a very weak effect to block voltage-gated potassium channel Kv1.1/KCNA1. Has a very weak effect to block voltage-gated potassium channel Kv1.1/KCNA1. This is Neurotoxin beta-KTx 14.3 from Lychas mucronatus (Chinese swimming scorpion).